The sequence spans 178 residues: MLEGVIRESITKANAKALKKDGYLIANVYGKGIENVNCAFKLNPFIKYLKEKKHLIFPVKLGDKTFEVVVQEYQKNPVTNELIHVDLLAVTKGVKSKFKVPVKHQGTPVGLKNKGILMLSKKRISVECAPEHLPDHYLVDVAPLDVNESILVRDLEKHENVKILDHDSIAVIGVIKAK.

It belongs to the bacterial ribosomal protein bL25 family. CTC subfamily. Part of the 50S ribosomal subunit; part of the 5S rRNA/L5/L18/L25 subcomplex. Contacts the 5S rRNA. Binds to the 5S rRNA independently of L5 and L18.

This is one of the proteins that binds to the 5S RNA in the ribosome where it forms part of the central protuberance. This chain is Large ribosomal subunit protein bL25, found in Helicobacter pylori (strain G27).